The following is a 639-amino-acid chain: Ubiquitin-like modifier-activating enzyme ATG7 (639 aa).

The GXGXXG motif motif lies at 322–327; that stretch reads GAGTLG. The active-site Glycyl thioester intermediate is Cys502.

The protein belongs to the ATG7 family. As to quaternary structure, homodimer.

The protein resides in the cytoplasm. The protein localises to the preautophagosomal structure. Its function is as follows. E1-like activating enzyme involved in the 2 ubiquitin-like systems required for cytoplasm to vacuole transport (Cvt) and autophagy. Activates ATG12 for its conjugation with ATG5 and ATG8 for its conjugation with phosphatidylethanolamine. Both systems are needed for the ATG8 association to Cvt vesicles and autophagosomes membranes. Autophagy is essential for maintenance of amino acid levels and protein synthesis under nitrogen starvation. Required for selective autophagic degradation of the nucleus (nucleophagy) as well as for mitophagy which contributes to regulate mitochondrial quantity and quality by eliminating the mitochondria to a basal level to fulfill cellular energy requirements and preventing excess ROS production. Plays a role in the regulation of filamentous growth and chronological longevity. The protein is Ubiquitin-like modifier-activating enzyme ATG7 (APG7) of Candida albicans (strain SC5314 / ATCC MYA-2876) (Yeast).